Consider the following 660-residue polypeptide: DNA mismatch repair protein MutL (660 aa).

It belongs to the DNA mismatch repair MutL/HexB family.

This protein is involved in the repair of mismatches in DNA. It is required for dam-dependent methyl-directed DNA mismatch repair. May act as a 'molecular matchmaker', a protein that promotes the formation of a stable complex between two or more DNA-binding proteins in an ATP-dependent manner without itself being part of a final effector complex. The sequence is that of DNA mismatch repair protein MutL from Streptococcus pyogenes serotype M12 (strain MGAS2096).